Here is a 154-residue protein sequence, read N- to C-terminus: Hexachlorocyclohexane dehydrochlorinase 1 (154 aa).

Residue Asp-25 is part of the active site. His-73 functions as the Proton acceptor in the catalytic mechanism.

This sequence belongs to the HCH dehydrochlorinase family. Homotrimer.

It is found in the periplasm. The enzyme catalyses gamma-hexachlorocyclohexane = (3R,4S,5S,6R)-pentachlorocyclohexene + chloride + H(+). It catalyses the reaction (3R,4S,5S,6R)-pentachlorocyclohexene = (3R,6R)-1,3,4,6-tetrachlorocyclohexa-1,4-diene + chloride + H(+). It participates in xenobiotic degradation; hexachlorocyclohexane degradation. In terms of biological role, catalyzes the conversion of the important environmental pollutant gamma-hexachlorocyclohexane (gamma-HCH or lindane) to 1,3,4,6-tetrachloro-1,4-cyclohexadiene (1,4-TCDN) via gamma-pentachlorocyclohexene (gamma-PCCH). Proceeds by two successive 1,2-anti conformationally dependent dehydrochlorinations. Also shows activity with alpha- and delta-HCH, giving alpha- and delta-PCCH respectively, but not with the beta isomer. This is Hexachlorocyclohexane dehydrochlorinase 1 from Sphingobium indicum (strain DSM 16412 / CCM 7286 / MTCC 6364 / B90A).